The chain runs to 257 residues: Phosphonates import ATP-binding protein PhnC (257 aa).

The region spanning 4–248 (IKFKNVSKVY…VFSKIYGRTI (245 aa)) is the ABC transporter domain. 37–44 (GLSGAGKS) is an ATP binding site.

Belongs to the ABC transporter superfamily. Phosphonates importer (TC 3.A.1.9.1) family. The complex is composed of two ATP-binding proteins (PhnC), two transmembrane proteins (PhnE) and a solute-binding protein (PhnD).

The protein localises to the cell membrane. It carries out the reaction phosphonate(out) + ATP + H2O = phosphonate(in) + ADP + phosphate + H(+). Part of the ABC transporter complex PhnCDE involved in phosphonates import. Responsible for energy coupling to the transport system. The chain is Phosphonates import ATP-binding protein PhnC from Staphylococcus aureus (strain MRSA252).